We begin with the raw amino-acid sequence, 141 residues long: MAKKVAAIVKLQVPAGKATPAPPVGPALGQHGVNIMAFVKEFNDRTASQAGLIIPVEITVYEDRSFTFITKTPPAAVLLKKALGIETASGEPNRKKVGKVSREKIREIAEMKMKDLNAASIEAAMRMIEGTARSMGVEVEA.

Belongs to the universal ribosomal protein uL11 family. Part of the ribosomal stalk of the 50S ribosomal subunit. Interacts with L10 and the large rRNA to form the base of the stalk. L10 forms an elongated spine to which L12 dimers bind in a sequential fashion forming a multimeric L10(L12)X complex. Post-translationally, one or more lysine residues are methylated.

Functionally, forms part of the ribosomal stalk which helps the ribosome interact with GTP-bound translation factors. This Moorella thermoacetica (strain ATCC 39073 / JCM 9320) protein is Large ribosomal subunit protein uL11.